We begin with the raw amino-acid sequence, 400 residues long: CinA-like protein (400 aa).

This sequence belongs to the CinA family.

This Escherichia coli (strain SMS-3-5 / SECEC) protein is CinA-like protein.